The chain runs to 238 residues: uncharacterized protein (238 aa).

Belongs to the mimivirus L74/L77/R857 family.

This is an uncharacterized protein from Acanthamoeba polyphaga mimivirus (APMV).